A 207-amino-acid chain; its full sequence is Large ribosomal subunit protein uL4 (207 aa).

The interval arginine 44–glycine 76 is disordered. The span at glycine 60–glycine 71 shows a compositional bias: basic residues.

It belongs to the universal ribosomal protein uL4 family. As to quaternary structure, part of the 50S ribosomal subunit.

Its function is as follows. One of the primary rRNA binding proteins, this protein initially binds near the 5'-end of the 23S rRNA. It is important during the early stages of 50S assembly. It makes multiple contacts with different domains of the 23S rRNA in the assembled 50S subunit and ribosome. Functionally, forms part of the polypeptide exit tunnel. The polypeptide is Large ribosomal subunit protein uL4 (Ruminiclostridium cellulolyticum (strain ATCC 35319 / DSM 5812 / JCM 6584 / H10) (Clostridium cellulolyticum)).